Reading from the N-terminus, the 1517-residue chain is uncharacterized protein (1517 aa).

Residues 1–13 are compositionally biased toward polar residues; that stretch reads MNQFPNQPGNFGQ. The segment at 1 to 26 is disordered; it reads MNQFPNQPGNFGQNYYKPVQGSIPAN. N-linked (GlcNAc...) asparagine glycosylation is found at N35, N40, and N76. 5 helical membrane passes run 231–251, 397–417, 510–530, 612–632, and 720–740; these read AIDFVVSLFGCFIAGVVAVPI, AIGLILGVLHTVFSGYTTVWC, FVPLLCLPEHGGMVISMKDWI, PNIVGEIWVDSPSLSGGFFAL, and VFDCSAFDIFVNSEHLPVVLL. N917 is a glycosylation site (N-linked (GlcNAc...) asparagine). A run of 4 helical transmembrane segments spans residues 956–976, 985–1005, 1051–1071, and 1114–1134; these read FVYALYACFYLGLIPIPVPPL, VPAFLFLIKHYYVSAVLVNSE, VKLDPICLDPAFPALVWAFWS, and GIGFFHTCLMGVFLGTTTYLL. N1178 is a glycosylation site (N-linked (GlcNAc...) asparagine). A helical transmembrane segment spans residues 1261–1281; it reads PYALPLLDSGMVPVSTQLAIV. The N-linked (GlcNAc...) asparagine glycan is linked to N1321. Helical transmembrane passes span 1353–1373 and 1408–1428; these read APVVDMQLLYVLGPIGETFEV and VVVVIEALGQDFLAAIVPVVI.

It to S.pombe SpAC22F3.04.

The protein localises to the membrane. This is an uncharacterized protein from Schizosaccharomyces pombe (strain 972 / ATCC 24843) (Fission yeast).